Reading from the N-terminus, the 602-residue chain is Elongation factor 4 (602 aa).

The 183-residue stretch at 7–189 (SKIRNFCIIA…AIVRRVPPPQ (183 aa)) folds into the tr-type G domain. GTP-binding positions include 19 to 24 (DHGKST) and 136 to 139 (NKVD).

It belongs to the TRAFAC class translation factor GTPase superfamily. Classic translation factor GTPase family. LepA subfamily.

It localises to the cell inner membrane. It carries out the reaction GTP + H2O = GDP + phosphate + H(+). Required for accurate and efficient protein synthesis under certain stress conditions. May act as a fidelity factor of the translation reaction, by catalyzing a one-codon backward translocation of tRNAs on improperly translocated ribosomes. Back-translocation proceeds from a post-translocation (POST) complex to a pre-translocation (PRE) complex, thus giving elongation factor G a second chance to translocate the tRNAs correctly. Binds to ribosomes in a GTP-dependent manner. The protein is Elongation factor 4 of Prochlorococcus marinus (strain MIT 9301).